An 80-amino-acid polypeptide reads, in one-letter code: Putative defensin-like protein 23 (80 aa).

An N-terminal signal peptide occupies residues 1 to 25 (MTTTMKIMSFAMLLVLLFSIDVVEG). 4 disulfide bridges follow: Cys-31/Cys-80, Cys-41/Cys-66, Cys-50/Cys-76, and Cys-54/Cys-78.

Belongs to the DEFL family.

Its subcellular location is the secreted. This Arabidopsis thaliana (Mouse-ear cress) protein is Putative defensin-like protein 23.